The sequence spans 373 residues: Alcohol dehydrogenase 2 (373 aa).

Zn(2+) is bound by residues Cys-47, Thr-49, His-69, Cys-99, Cys-102, Cys-105, Cys-113, and Cys-177. Residues Thr-49 and His-69 each coordinate an alcohol. Position 49 (Thr-49) interacts with NAD(+). Residues 202-207, Asp-226, Lys-231, Thr-272, Phe-316, and Arg-366 each bind NAD(+); that span reads GLGAVG.

This sequence belongs to the zinc-containing alcohol dehydrogenase family. As to quaternary structure, homodimer. Zn(2+) is required as a cofactor.

It localises to the cytoplasm. It carries out the reaction a primary alcohol + NAD(+) = an aldehyde + NADH + H(+). The enzyme catalyses a secondary alcohol + NAD(+) = a ketone + NADH + H(+). The protein is Alcohol dehydrogenase 2 (ADH2) of Hordeum vulgare (Barley).